The primary structure comprises 126 residues: Urease subunit beta (126 aa).

This sequence belongs to the urease beta subunit family. As to quaternary structure, heterotrimer of UreA (gamma), UreB (beta) and UreC (alpha) subunits. Three heterotrimers associate to form the active enzyme.

The protein localises to the cytoplasm. It carries out the reaction urea + 2 H2O + H(+) = hydrogencarbonate + 2 NH4(+). It participates in nitrogen metabolism; urea degradation; CO(2) and NH(3) from urea (urease route): step 1/1. In Sporosarcina pasteurii (Bacillus pasteurii), this protein is Urease subunit beta.